The sequence spans 47 residues: Sperm protamine P1 (47 aa).

Belongs to the protamine P1 family. As to expression, testis.

It is found in the nucleus. The protein resides in the chromosome. Functionally, protamines substitute for histones in the chromatin of sperm during the haploid phase of spermatogenesis. They compact sperm DNA into a highly condensed, stable and inactive complex. This Galeopterus variegatus (Malayan flying lemur) protein is Sperm protamine P1 (PRM1).